Reading from the N-terminus, the 54-residue chain is uncharacterized protein (54 aa).

This is an uncharacterized protein from Saccharolobus solfataricus (Sulfolobus solfataricus).